The chain runs to 425 residues: Formyl-CoA:oxalate CoA-transferase (425 aa).

CoA-binding positions include 17–18, arginine 38, 72–75, 96–98, arginine 104, and 136–139; these read QS, LDTK, NFG, and KVYE. Catalysis depends on aspartate 168, which acts as the Nucleophile. Substrate is bound at residue 247–249; the sequence is GGQ.

This sequence belongs to the CoA-transferase III family. Frc subfamily. In terms of assembly, homodimer.

The catalysed reaction is formyl-CoA + oxalate = oxalyl-CoA + formate. The protein operates within metabolic intermediate degradation; oxalate degradation; CO(2) and formate from oxalate: step 1/2. In terms of biological role, involved in the catabolism of oxalate and in the adapatation to low pH via the induction of the oxalate-dependent acid tolerance response (ATR). Catalyzes the transfer of the CoA moiety from formyl-CoA to oxalate. The chain is Formyl-CoA:oxalate CoA-transferase from Bradyrhizobium sp. (strain ORS 278).